Reading from the N-terminus, the 144-residue chain is uncharacterized protein (144 aa).

Residues Lys24–Tyr67 adopt a coiled-coil conformation.

This is an uncharacterized protein from Aquifex aeolicus (strain VF5).